We begin with the raw amino-acid sequence, 325 residues long: Tagatose 1,6-diphosphate aldolase (325 aa).

Belongs to the aldolase LacD family.

It catalyses the reaction D-tagatofuranose 1,6-bisphosphate = D-glyceraldehyde 3-phosphate + dihydroxyacetone phosphate. It functions in the pathway carbohydrate metabolism; D-tagatose 6-phosphate degradation; D-glyceraldehyde 3-phosphate and glycerone phosphate from D-tagatose 6-phosphate: step 2/2. This is Tagatose 1,6-diphosphate aldolase from Staphylococcus haemolyticus (strain JCSC1435).